The following is a 379-amino-acid chain: GDSL esterase/lipase EXL2 (379 aa).

A signal peptide spans 1–35; sequence MKRNSINIHHVTSFSSSPFWCVFFLVLLCKTSTNA. The N-linked (GlcNAc...) asparagine glycan is linked to Asn-42. Catalysis depends on Ser-54, which acts as the Nucleophile. Residues Asp-358 and His-361 contribute to the active site.

This sequence belongs to the 'GDSL' lipolytic enzyme family.

It is found in the secreted. This chain is GDSL esterase/lipase EXL2 (EXL2), found in Arabidopsis thaliana (Mouse-ear cress).